Consider the following 129-residue polypeptide: Holo-[acyl-carrier-protein] synthase (129 aa).

Mg(2+) is bound by residues Asp-8 and Glu-58.

Belongs to the P-Pant transferase superfamily. AcpS family. It depends on Mg(2+) as a cofactor.

The protein localises to the cytoplasm. It carries out the reaction apo-[ACP] + CoA = holo-[ACP] + adenosine 3',5'-bisphosphate + H(+). Functionally, transfers the 4'-phosphopantetheine moiety from coenzyme A to a Ser of acyl-carrier-protein. The sequence is that of Holo-[acyl-carrier-protein] synthase from Acidithiobacillus ferrooxidans (strain ATCC 53993 / BNL-5-31) (Leptospirillum ferrooxidans (ATCC 53993)).